A 512-amino-acid chain; its full sequence is 2-isopropylmalate synthase (512 aa).

One can recognise a Pyruvate carboxyltransferase domain in the interval 5–268 (LIIFDTTLRD…ELGIDTQHIV (264 aa)). Mn(2+) is bound by residues Asp-14, His-202, His-204, and Asn-239. The segment at 394–512 (GFVSLSQRSE…SKAERVAAQG (119 aa)) is regulatory domain.

This sequence belongs to the alpha-IPM synthase/homocitrate synthase family. LeuA type 1 subfamily. Homodimer. The cofactor is Mn(2+).

The protein localises to the cytoplasm. It catalyses the reaction 3-methyl-2-oxobutanoate + acetyl-CoA + H2O = (2S)-2-isopropylmalate + CoA + H(+). It participates in amino-acid biosynthesis; L-leucine biosynthesis; L-leucine from 3-methyl-2-oxobutanoate: step 1/4. Functionally, catalyzes the condensation of the acetyl group of acetyl-CoA with 3-methyl-2-oxobutanoate (2-ketoisovalerate) to form 3-carboxy-3-hydroxy-4-methylpentanoate (2-isopropylmalate). This is 2-isopropylmalate synthase from Paracidovorax citrulli (strain AAC00-1) (Acidovorax citrulli).